The chain runs to 612 residues: Elongation factor 4 (612 aa).

The 183-residue stretch at asparagine 11–serine 193 folds into the tr-type G domain. Residues aspartate 23–threonine 28 and asparagine 140–aspartate 143 contribute to the GTP site.

It belongs to the TRAFAC class translation factor GTPase superfamily. Classic translation factor GTPase family. LepA subfamily.

The protein localises to the cell membrane. The catalysed reaction is GTP + H2O = GDP + phosphate + H(+). In terms of biological role, required for accurate and efficient protein synthesis under certain stress conditions. May act as a fidelity factor of the translation reaction, by catalyzing a one-codon backward translocation of tRNAs on improperly translocated ribosomes. Back-translocation proceeds from a post-translocation (POST) complex to a pre-translocation (PRE) complex, thus giving elongation factor G a second chance to translocate the tRNAs correctly. Binds to ribosomes in a GTP-dependent manner. The chain is Elongation factor 4 from Lactobacillus acidophilus (strain ATCC 700396 / NCK56 / N2 / NCFM).